The following is a 3856-amino-acid chain: Hybrid PKS-NRPS synthetase traA (3856 aa).

One can recognise a Ketosynthase family 3 (KS3) domain in the interval Pro6 to Glu438. Catalysis depends on for beta-ketoacyl synthase activity residues Cys179, His318, and His358. Residues Ile554–Thr885 form a malonyl-CoA:ACP transacylase (MAT) domain region. Positions His943 to Pro1081 are N-terminal hotdog fold. The tract at residues His943 to Thr1247 is dehydratase (DH) domain. Residues His943–Asp1249 enclose the PKS/mFAS DH domain. The active-site Proton acceptor; for dehydratase activity is His975. Positions Met1096–Asp1249 are C-terminal hotdog fold. The active-site Proton donor; for dehydratase activity is Asp1156. The tract at residues Leu1290–Ser1456 is methyltransferase (MT) domain. The interval Thr1984–Val2158 is ketoreductase (KR) domain. The Carrier 1 domain maps to Ala2266–Leu2347. Ser2307 bears the O-(pantetheine 4'-phosphoryl)serine mark. The disordered stretch occupies residues Ile2351–Asn2422. Composition is skewed to low complexity over residues Ser2357–Thr2369 and Thr2399–Thr2418. The segment at Val2446–Lys2884 is condensation (C) domain. Positions Gln2910–Ala3310 are adenylation (A) domain. Residues Ser3403–Ser3429 are disordered. The Carrier 2 domain occupies Glu3428–Leu3507. O-(pantetheine 4'-phosphoryl)serine is present on Ser3467. The reductase (R) domain stretch occupies residues Val3544–Ser3768.

The protein in the C-terminal section; belongs to the NRP synthetase family.

It functions in the pathway secondary metabolite biosynthesis. In terms of biological role, hybrid PKS-NRPS synthetase; part of the tra gene cluster that produces terrestric acid. The clavatol biosynthesis cluster cla and the terrestric acid cluster tra are both involved in the production of peniphenones and penilactones. The non-reducing PKS claF is responsible for the formation of clavatol from successive condensations of 3 malonyl-CoA units, presumably with a simple acetyl-CoA starter unit, and 2 methylation steps. The esterase claE probably collaborates with claF by catalyzing the hydrolysis of ACP-bound acyl intermediates to free the ACP from stalled intermediates. The clavatol oxidase claD then converts clavatol to hydroxyclavatol. Spontaneous dehydration of hydroxyclavatol leads to the accumulation of the highly active ortho-quinone methide. On the other hand, the PKS-NRPS hybrid traA is involved in the formation of crustosic acid, with the help of traB and traD. The polyketide synthase module (PKS) of traA is responsible for the synthesis of the polyketide backbone via the condensation of an acetyl-CoA starter unit with 3 malonyl-CoA units. The downstream nonribosomal peptide synthetase (NRPS) module then amidates the carboxyl end of the polyketide with L-malic acid. Because traA lacks a designated enoylreductase (ER) domain, the required activity is provided the enoyl reductase traG. Crustosic acid undergoes decarboxylation and isomerization to the terrestric acid, catalyzed by the 2-oxoglutarate-dependent dioxygenase traH. Both acids are further converted to the 2 gamma-butyrolactones (R)-5-methyltetronic acid and (S)-5-carboxylmethyltetronic acid, with involvement of the cytochrome P450 monooxygenase claJ. Spontaneous addition of the methide to these gamma-butyrolactones leads to peniphenone D and penilactone D, which undergo again stereospecific attacking by methide to give penilactones A and B. This Penicillium crustosum (Blue mold fungus) protein is Hybrid PKS-NRPS synthetase traA.